A 425-amino-acid polypeptide reads, in one-letter code: Enolase 2 (425 aa).

Glutamine 163 lines the (2R)-2-phosphoglycerate pocket. Catalysis depends on glutamate 205, which acts as the Proton donor. Mg(2+) is bound by residues aspartate 242, glutamate 285, and aspartate 312. Residues lysine 337, arginine 366, serine 367, and lysine 388 each contribute to the (2R)-2-phosphoglycerate site. Lysine 337 serves as the catalytic Proton acceptor.

This sequence belongs to the enolase family. It depends on Mg(2+) as a cofactor.

It is found in the cytoplasm. It localises to the secreted. The protein resides in the cell surface. The catalysed reaction is (2R)-2-phosphoglycerate = phosphoenolpyruvate + H2O. The protein operates within carbohydrate degradation; glycolysis; pyruvate from D-glyceraldehyde 3-phosphate: step 4/5. Functionally, catalyzes the reversible conversion of 2-phosphoglycerate (2-PG) into phosphoenolpyruvate (PEP). It is essential for the degradation of carbohydrates via glycolysis. The polypeptide is Enolase 2 (Cupriavidus metallidurans (strain ATCC 43123 / DSM 2839 / NBRC 102507 / CH34) (Ralstonia metallidurans)).